A 257-amino-acid chain; its full sequence is MAPITEETVAGLKDTIGKLEARIEDLEGRLGQSKPKSVAEQMRIILMGPPGAGKGTQAPRIKEKYCVCHLATGDMLRSQVAKKTELGKEAKKIMDQGGLVSDEIMVNMIKSELENNAECKNGFILDGFPRTVAQAERLDDMLAARQQKLQHAIELQIDDALLVARITGRLVHPASGRSYHKIFNPPKQEMKDDITGEPLIQRSDDNAETLKKRLGTYHAQTAPVCDYYKKTGIWRGIDASQEPGQVWKSLLGVFQKN.

51–56 (GAGKGT) contacts ATP. Residues 71–100 (ATGDMLRSQVAKKTELGKEAKKIMDQGGLV) are NMP. AMP is bound by residues Thr-72, Arg-77, 98 to 100 (GLV), 127 to 130 (GFPR), and Gln-134. The interval 168–205 (GRLVHPASGRSYHKIFNPPKQEMKDDITGEPLIQRSDD) is LID. ATP contacts are provided by residues Arg-169 and 178 to 179 (SY). Arg-202 and Arg-213 together coordinate AMP. Gln-241 contacts ATP.

It belongs to the adenylate kinase family. AK2 subfamily. In terms of assembly, monomer.

It is found in the cytoplasm. It localises to the cytosol. Its subcellular location is the mitochondrion intermembrane space. It catalyses the reaction AMP + ATP = 2 ADP. Its function is as follows. Catalyzes the reversible transfer of the terminal phosphate group between ATP and AMP. Plays an important role in cellular energy homeostasis and in adenine nucleotide metabolism. Adenylate kinase activity is critical for regulation of the phosphate utilization and the AMP de novo biosynthesis pathways. The protein is Adenylate kinase (adk1) of Aspergillus terreus (strain NIH 2624 / FGSC A1156).